The following is a 349-amino-acid chain: MGEEKYLPELMAEKDSLDPSFVHASRLLAEEIEKFQGSDGRKEDEEKKYLDVISNKNIKLSERVLIPVKQYPKFNFVGKLLGPRGNSLKRLQEETGAKMSILGKGSMRDKAKEEELRKSGEAKYAHLSDELHVLIEVFAPPGEAYSRMSHALEEIKKFLVPDYNDEIRQEQLRELSYLNGSEESGRGRGIRGRGIRITPTAPSRGRGGAVPPPPPPGRGVLTPRGTTVTRGALPVPPVARGVPTPRARGTAAVPGYRAPPPPAPEAYEEYGYDDGYGGEYDDQTYEAYDNSYVTPTQSVPEYYDYGHGVNEDAYDSYAPEEWTTTRSSLKAPPPRSARGGYREHPYGRY.

Residues 65–135 (LIPVKQYPKF…HLSDELHVLI (71 aa)) form the KH domain. 2 disordered regions span residues 181-263 (SEES…PPPA) and 320-349 (EEWT…YGRY). Residues 218 to 231 (RGVLTPRGTTVTRG) are compositionally biased toward low complexity. An omega-N-methylarginine mark is found at Arg230 and Arg240. Residues 340–349 (GYREHPYGRY) show a composition bias toward basic and acidic residues.

This sequence belongs to the KHDRBS family. Self-associates to form homooligomers. Interacts with SAFB, SFRS9 and YTHDC1. Found in a complex with KHDRBS1, KHDRBS2 and KHDRBS3. Interacts with RBMX. Interacts with the SH3 domains of FYN and PLCG1. Interacts with the SH2 domains of FYN, GRAP2, PLCG1 and RASA1. Interacts with RBMX. In terms of processing, methylated. Phosphorylated on tyrosine residues by FYN. Tyrosine phosphorylated by PTK6 and SRC. Tyrosine phosphorylated by SRC during mitosis. Expressed in the cortex, cerebellum, striatum, midbrain, brainstem and thalamus of the brain (at protein level). Expressed in neurons (at protein level). Expressed in brain and testis. Expressed in the dentate gyrus of the hippocampus.

It localises to the nucleus. Functionally, RNA-binding protein that plays a role in the regulation of alternative splicing and influences mRNA splice site selection and exon inclusion. Its phosphorylation by FYN inhibits its ability to regulate splice site selection. Induces an increased concentration-dependent incorporation of exon in CD44 pre-mRNA by direct binding to purine-rich exonic enhancer. May function as an adapter protein for Src kinases during mitosis. Binds both poly(A) and poly(U) homopolymers. Phosphorylation by PTK6 inhibits its RNA-binding ability. In Rattus norvegicus (Rat), this protein is KH domain-containing, RNA-binding, signal transduction-associated protein 2 (Khdrbs2).